We begin with the raw amino-acid sequence, 292 residues long: High-affinity heme uptake system protein IsdE (292 aa).

Residues 1-19 (MRIIKYLTILVISVVILTS) form the signal peptide. The N-palmitoyl cysteine moiety is linked to residue Cys-20. The S-diacylglycerol cysteine moiety is linked to residue Cys-20. The region spanning 35–291 (RIVPTTVALT…QLYDLFYKDK (257 aa)) is the Fe/B12 periplasmic-binding domain. Heme-binding residues include Val-41, Ala-42, Ser-60, Tyr-61, Met-78, and His-229.

Belongs to the bacterial solute-binding protein 8 family. It depends on heme b as a cofactor.

It is found in the cell membrane. Functionally, involved in heme (porphyrin) scavenging. Binds Fe(2+) and Fe(3+) heme but the largest fraction is Fe(2+) heme. Functions as a high-affinity heme binding protein and probably has a role in relaying heme-iron from cell wall-anchored isd proteins receptors to the probable permease IsdF. This Staphylococcus aureus (strain Mu3 / ATCC 700698) protein is High-affinity heme uptake system protein IsdE (isdE).